The following is a 303-amino-acid chain: D-alanine--D-alanine ligase (303 aa).

Residues 100–295 form the ATP-grasp domain; sequence KQLLRRHGIL…FPALIARLIE (196 aa). Residue 127 to 180 participates in ATP binding; it reads GLGYPLFVKPNTGGSSLCLSRVTQPEGLAPALEAVFAHCGEAIVEPAIPGVEVT. Residues Asp-249, Glu-262, and Asn-264 each coordinate Mg(2+).

This sequence belongs to the D-alanine--D-alanine ligase family. The cofactor is Mg(2+). It depends on Mn(2+) as a cofactor.

The protein localises to the cytoplasm. It carries out the reaction 2 D-alanine + ATP = D-alanyl-D-alanine + ADP + phosphate + H(+). It functions in the pathway cell wall biogenesis; peptidoglycan biosynthesis. Cell wall formation. This is D-alanine--D-alanine ligase from Nitratidesulfovibrio vulgaris (strain ATCC 29579 / DSM 644 / CCUG 34227 / NCIMB 8303 / VKM B-1760 / Hildenborough) (Desulfovibrio vulgaris).